We begin with the raw amino-acid sequence, 392 residues long: Cellobiose 2-epimerase (392 aa).

This sequence belongs to the cellobiose 2-epimerase family.

The enzyme catalyses D-cellobiose = beta-D-glucosyl-(1-&gt;4)-D-mannopyranose. In terms of biological role, catalyzes the reversible epimerization of cellobiose to 4-O-beta-D-glucopyranosyl-D-mannose (Glc-Man). Can also epimerize cellotriose to Glc-Glc-Man, cellotetraose to Glc-Glc-Glc-Man, lactose to epilactose, and mannobiose to 4-O-beta-D-mannopyranosyl-D-glucopyranose (Man-Glc). May function as a mannobiose 2-epimerase in vivo and be involved in a mannan catabolic pathway which feeds into glycolysis. This Bacteroides fragilis (strain ATCC 25285 / DSM 2151 / CCUG 4856 / JCM 11019 / LMG 10263 / NCTC 9343 / Onslow / VPI 2553 / EN-2) protein is Cellobiose 2-epimerase (bfce).